Consider the following 303-residue polypeptide: Mevalonate kinase (303 aa).

Residue Pro-90 to Ala-100 coordinates ATP. The Proton acceptor role is filled by Asp-141.

It belongs to the GHMP kinase family. Mevalonate kinase subfamily. As to quaternary structure, homodimer. The cofactor is Mg(2+).

It is found in the cytoplasm. The catalysed reaction is (R)-mevalonate + ATP = (R)-5-phosphomevalonate + ADP + H(+). Its pathway is isoprenoid biosynthesis; isopentenyl diphosphate biosynthesis via mevalonate pathway; isopentenyl diphosphate from (R)-mevalonate: step 1/3. Catalyzes the phosphorylation of (R)-mevalonate (MVA) to (R)-mevalonate 5-phosphate (MVAP). Functions in the mevalonate (MVA) pathway leading to isopentenyl diphosphate (IPP), a key precursor for the biosynthesis of isoprenoid compounds such as archaeal membrane lipids. The sequence is that of Mevalonate kinase from Methanothermobacter thermautotrophicus (strain ATCC 29096 / DSM 1053 / JCM 10044 / NBRC 100330 / Delta H) (Methanobacterium thermoautotrophicum).